Reading from the N-terminus, the 344-residue chain is Uroporphyrinogen decarboxylase (344 aa).

Residues 23-27 (RQAGR), D73, Y149, T204, and H321 contribute to the substrate site.

The protein belongs to the uroporphyrinogen decarboxylase family. As to quaternary structure, homodimer.

Its subcellular location is the cytoplasm. The enzyme catalyses uroporphyrinogen III + 4 H(+) = coproporphyrinogen III + 4 CO2. The protein operates within porphyrin-containing compound metabolism; protoporphyrin-IX biosynthesis; coproporphyrinogen-III from 5-aminolevulinate: step 4/4. In terms of biological role, catalyzes the decarboxylation of four acetate groups of uroporphyrinogen-III to yield coproporphyrinogen-III. The protein is Uroporphyrinogen decarboxylase of Francisella philomiragia subsp. philomiragia (strain ATCC 25017 / CCUG 19701 / FSC 153 / O#319-036).